A 146-amino-acid chain; its full sequence is MSGAGMVDITAKEPVRREAVASGFISLKRETVKAIREGRVEKGDVISVASVAAVLAVKETPRLIPLTHPIPIEKVEPEVRVRDDGVEVRVRVATTAKTGVEMEALAGVTAALLTVWDMVKSLEKDETGNYPDTVITGVKVEVKRKG.

Substrate is bound by residues 66–68 and 102–103; these read LTH and ME. The active site involves Asp117.

The protein belongs to the MoaC family. As to quaternary structure, homohexamer; trimer of dimers.

It catalyses the reaction (8S)-3',8-cyclo-7,8-dihydroguanosine 5'-triphosphate = cyclic pyranopterin phosphate + diphosphate. It participates in cofactor biosynthesis; molybdopterin biosynthesis. In terms of biological role, catalyzes the conversion of (8S)-3',8-cyclo-7,8-dihydroguanosine 5'-triphosphate to cyclic pyranopterin monophosphate (cPMP). The chain is Probable cyclic pyranopterin monophosphate synthase from Aeropyrum pernix (strain ATCC 700893 / DSM 11879 / JCM 9820 / NBRC 100138 / K1).